The primary structure comprises 149 residues: Chromophore lyase CpcS/CpeS homolog (149 aa).

It belongs to the CpcS/CpeS biliprotein lyase family.

It is found in the plastid. The protein localises to the chloroplast. Might function to covalently attach a chromophore to Cys residue(s) of phycobiliproteins. The polypeptide is Chromophore lyase CpcS/CpeS homolog (Porphyra purpurea (Red seaweed)).